We begin with the raw amino-acid sequence, 341 residues long: DNA repair protein XRCC3 (341 aa).

Residue M1 is modified to N-acetylmethionine. 107-114 (GRSSAGKT) is a binding site for ATP.

The protein belongs to the RecA family. RAD51 subfamily. Interacts with RAD51C and RAD51. Part of the CX3 complex consisting of RAD51C and XRCC3; the complex has a ring-like structure arranged into a flat disc around a central channel; CX3 can interact with RAD51 in vitro. Forms a complex with FANCD2, BRCA2 and phosphorylated FANCG. Interacts with SWSAP1 and ZSWIM7; involved in homologous recombination repair. Interacts directly with PALB2 which may serve as a scaffold for a HR complex containing PALB2, BRCA2, RAD51C, RAD51 and XRCC3.

The protein localises to the nucleus. It is found in the cytoplasm. Its subcellular location is the perinuclear region. It localises to the mitochondrion matrix. In terms of biological role, involved in the homologous recombination repair (HRR) pathway of double-stranded DNA, thought to repair chromosomal fragmentation, translocations and deletions. Part of the RAD21 paralog protein complex CX3 which acts in the BRCA1-BRCA2-dependent HR pathway. Upon DNA damage, CX3 acts downstream of RAD51 recruitment; the complex binds predominantly to the intersection of the four duplex arms of the Holliday junction (HJ) and to junctions of replication forks. Involved in HJ resolution and thus in processing HR intermediates late in the DNA repair process; the function may be linked to the CX3 complex and seems to involve GEN1 during mitotic cell cycle progression. Part of a PALB2-scaffolded HR complex containing BRCA2 and RAD51C and which is thought to play a role in DNA repair by HR. Plays a role in regulating mitochondrial DNA copy number under conditions of oxidative stress in the presence of RAD51 and RAD51C. This chain is DNA repair protein XRCC3 (XRCC3), found in Bos taurus (Bovine).